An 806-amino-acid chain; its full sequence is Leucine--tRNA ligase (806 aa).

The 'HIGH' region signature appears at 40–51 (PYPSGQGLHVGH). Residues 578-582 (KMSKS) carry the 'KMSKS' region motif. Lys-581 contacts ATP.

Belongs to the class-I aminoacyl-tRNA synthetase family.

Its subcellular location is the cytoplasm. It catalyses the reaction tRNA(Leu) + L-leucine + ATP = L-leucyl-tRNA(Leu) + AMP + diphosphate. The chain is Leucine--tRNA ligase from Limosilactobacillus reuteri (strain DSM 20016) (Lactobacillus reuteri).